The sequence spans 343 residues: Probable dual-specificity RNA methyltransferase RlmN (343 aa).

Glu-92 serves as the catalytic Proton acceptor. One can recognise a Radical SAM core domain in the interval 98–328 (YHHGLTACIS…TTVRREMGAD (231 aa)). Residues Cys-105 and Cys-333 are joined by a disulfide bond. [4Fe-4S] cluster-binding residues include Cys-112, Cys-116, and Cys-119. S-adenosyl-L-methionine is bound by residues 159-160 (GE), Ser-191, 214-216 (SLH), and Asn-290. The S-methylcysteine intermediate role is filled by Cys-333.

It belongs to the radical SAM superfamily. RlmN family. It depends on [4Fe-4S] cluster as a cofactor.

The protein localises to the cytoplasm. It catalyses the reaction adenosine(2503) in 23S rRNA + 2 reduced [2Fe-2S]-[ferredoxin] + 2 S-adenosyl-L-methionine = 2-methyladenosine(2503) in 23S rRNA + 5'-deoxyadenosine + L-methionine + 2 oxidized [2Fe-2S]-[ferredoxin] + S-adenosyl-L-homocysteine. The enzyme catalyses adenosine(37) in tRNA + 2 reduced [2Fe-2S]-[ferredoxin] + 2 S-adenosyl-L-methionine = 2-methyladenosine(37) in tRNA + 5'-deoxyadenosine + L-methionine + 2 oxidized [2Fe-2S]-[ferredoxin] + S-adenosyl-L-homocysteine. Functionally, specifically methylates position 2 of adenine 2503 in 23S rRNA and position 2 of adenine 37 in tRNAs. The polypeptide is Probable dual-specificity RNA methyltransferase RlmN (Alkaliphilus oremlandii (strain OhILAs) (Clostridium oremlandii (strain OhILAs))).